The chain runs to 962 residues: Translation initiation factor IF-2 (962 aa).

A disordered region spans residues 101–366 (AAQTQAAPVR…KKGKKLKLEP (266 aa)). The segment covering 117–141 (DAAKARAEAATRAEARAKAEAEAAK) has biased composition (basic and acidic residues). Over residues 145-157 (AKAGNKAKPAAQK) the composition is skewed to low complexity. Basic and acidic residues predominate over residues 173-216 (KPAEESKAEKAQADKMPSKKPAEPKEKAAKPKHERNGKGKDAKK). The segment covering 219–234 (KPAAPAVPQPVVSAEE) has biased composition (low complexity). A compositionally biased stretch (basic and acidic residues) spans 235–269 (QAQRDEEARRAAALRAHQEALLKEKQERQARREAM). Over residues 270 to 283 (KQQAEQQAKAAQEA) the composition is skewed to low complexity. Residues 338–354 (GGRDRNNARNGDDERVR) show a composition bias toward basic and acidic residues. A tr-type G domain is found at 462-631 (PRPPVVTVMG…LLEAEVLELT (170 aa)). The tract at residues 471–478 (GHVDHGKT) is G1. 471–478 (GHVDHGKT) lines the GTP pocket. The G2 stretch occupies residues 496 to 500 (GITQH). The interval 517-520 (DTPG) is G3. GTP contacts are provided by residues 517–521 (DTPGH) and 571–574 (NKID). The interval 571–574 (NKID) is G4. Residues 607-609 (SAK) are G5.

It belongs to the TRAFAC class translation factor GTPase superfamily. Classic translation factor GTPase family. IF-2 subfamily.

The protein resides in the cytoplasm. One of the essential components for the initiation of protein synthesis. Protects formylmethionyl-tRNA from spontaneous hydrolysis and promotes its binding to the 30S ribosomal subunits. Also involved in the hydrolysis of GTP during the formation of the 70S ribosomal complex. This is Translation initiation factor IF-2 from Neisseria meningitidis serogroup A / serotype 4A (strain DSM 15465 / Z2491).